The primary structure comprises 92 residues: Subtilisin inhibitor 1 (92 aa).

Over residues 1-12 (QEQGTNPSQEQN) the composition is skewed to polar residues. Residues 1–31 (QEQGTNPSQEQNVPLPRNYKQALETNTPTKT) form a disordered region.

The protein belongs to the protease inhibitor I13 (potato type I serine protease inhibitor) family.

Inhibitor of subtilisin. This Phaseolus angularis (Azuki bean) protein is Subtilisin inhibitor 1.